Reading from the N-terminus, the 304-residue chain is Glutaminase (304 aa).

Substrate is bound by residues Ser-63, Asn-114, Glu-158, Asn-165, Tyr-189, Tyr-240, and Val-258.

Belongs to the glutaminase family. Homotetramer.

It carries out the reaction L-glutamine + H2O = L-glutamate + NH4(+). This is Glutaminase from Shewanella sp. (strain ANA-3).